The sequence spans 97 residues: Class II hydrophobin NC2 (97 aa).

Residues 1-17 (MQFTIATVLSLLTITLA) form the signal peptide. 4 disulfide bridges follow: cysteine 31–cysteine 79, cysteine 40–cysteine 70, cysteine 41–cysteine 53, and cysteine 80–cysteine 91. N-linked (GlcNAc...) asparagine glycosylation occurs at asparagine 62.

It belongs to the cerato-ulmin hydrophobin family. As to quaternary structure, homotrimer. Further self-assembles to form highly ordered films at water-air interfaces through intermolecular interactions.

It localises to the secreted. Its subcellular location is the cell wall. Aerial growth, conidiation, and dispersal of filamentous fungi in the environment rely upon a capability of their secreting small amphipathic proteins called hydrophobins (HPBs) with low sequence identity. Class I can self-assemble into an outermost layer of rodlet bundles on aerial cell surfaces, conferring cellular hydrophobicity that supports fungal growth, development and dispersal; whereas Class II form highly ordered films at water-air interfaces through intermolecular interactions but contribute nothing to the rodlet structure. NC2 is a class II hydrophobin that has the potential to adsorb to the hydrophobic interface at the hydrophobic-hydrophilic interface at very high rate but the predicted self-assembly NC2 film possesses a lower flexural rigidity than other class II hydrophobins such as HFBII from Hypocrea jecorina (also known as Trichoderma reesei). The polypeptide is Class II hydrophobin NC2 (Neurospora crassa (strain ATCC 24698 / 74-OR23-1A / CBS 708.71 / DSM 1257 / FGSC 987)).